The chain runs to 346 residues: Dimethylallyltranstransferase (346 aa).

Isopentenyl diphosphate contacts are provided by Lys96, Arg99, and His128. 2 residues coordinate Mg(2+): Asp135 and Asp141. Arg147 is a binding site for isopentenyl diphosphate.

The protein belongs to the FPP/GGPP synthase family. Requires Mg(2+) as cofactor.

The catalysed reaction is isopentenyl diphosphate + dimethylallyl diphosphate = (2E)-geranyl diphosphate + diphosphate. The protein operates within isoprenoid biosynthesis; geranyl diphosphate biosynthesis; geranyl diphosphate from dimethylallyl diphosphate and isopentenyl diphosphate: step 1/1. Prenyltransferase involved in the biosynthesis of ambiguines, a family of hapalindole-type alkaloids. Catalyzes the addition of isopentenyl diphosphate (IPP) onto dimethylallyl diphosphate (DMAPP) to form geranyl pyrophosphate (GPP). Cannot use farnesyl diphosphate (FPP) or geranylgeranyl diphosphate (GGPP). The sequence is that of Dimethylallyltranstransferase from Fischerella ambigua (strain UTEX 1903).